Consider the following 491-residue polypeptide: Probable glycine dehydrogenase (decarboxylating) subunit 2 (491 aa).

Lysine 264 carries the post-translational modification N6-(pyridoxal phosphate)lysine.

This sequence belongs to the GcvP family. C-terminal subunit subfamily. As to quaternary structure, the glycine cleavage system is composed of four proteins: P, T, L and H. In this organism, the P 'protein' is a heterodimer of two subunits. It depends on pyridoxal 5'-phosphate as a cofactor.

It catalyses the reaction N(6)-[(R)-lipoyl]-L-lysyl-[glycine-cleavage complex H protein] + glycine + H(+) = N(6)-[(R)-S(8)-aminomethyldihydrolipoyl]-L-lysyl-[glycine-cleavage complex H protein] + CO2. Functionally, the glycine cleavage system catalyzes the degradation of glycine. The P protein binds the alpha-amino group of glycine through its pyridoxal phosphate cofactor; CO(2) is released and the remaining methylamine moiety is then transferred to the lipoamide cofactor of the H protein. This chain is Probable glycine dehydrogenase (decarboxylating) subunit 2, found in Coxiella burnetii (strain CbuG_Q212) (Coxiella burnetii (strain Q212)).